A 447-amino-acid polypeptide reads, in one-letter code: Ribosomal protein uS12 methylthiotransferase RimO (447 aa).

An MTTase N-terminal domain is found at 10-120 (PKVGFVSLGC…VVNAVHDVVP (111 aa)). Cys19, Cys55, Cys84, Cys153, Cys157, and Cys160 together coordinate [4Fe-4S] cluster. The region spanning 139–377 (LTPRHYAYLK…MAHQQAISAA (239 aa)) is the Radical SAM core domain. The region spanning 380–447 (QMKIGKEIEV…DEYDLWAEML (68 aa)) is the TRAM domain.

This sequence belongs to the methylthiotransferase family. RimO subfamily. The cofactor is [4Fe-4S] cluster.

It localises to the cytoplasm. It catalyses the reaction L-aspartate(89)-[ribosomal protein uS12]-hydrogen + (sulfur carrier)-SH + AH2 + 2 S-adenosyl-L-methionine = 3-methylsulfanyl-L-aspartate(89)-[ribosomal protein uS12]-hydrogen + (sulfur carrier)-H + 5'-deoxyadenosine + L-methionine + A + S-adenosyl-L-homocysteine + 2 H(+). Catalyzes the methylthiolation of an aspartic acid residue of ribosomal protein uS12. The polypeptide is Ribosomal protein uS12 methylthiotransferase RimO (Pseudomonas syringae pv. syringae (strain B728a)).